We begin with the raw amino-acid sequence, 911 residues long: General transcription factor 3C polypeptide 2 (911 aa).

Disordered regions lie at residues 24–187 (DSPG…RRRA) and 205–297 (ALPA…MAPN). A compositionally biased stretch (polar residues) spans 35-46 (DVKTSSEMTSAE). A Phosphoserine modification is found at Ser63. A compositionally biased stretch (basic and acidic residues) spans 64–81 (PDQRRLPPEQESLSRLEQ). The segment covering 92-112 (SKPRASKPGRKRGGRTRKGPK) has biased composition (basic residues). Positions 114–123 (PQQPNPPSAP) are enriched in pro residues. Phosphoserine occurs at positions 132, 165, 167, 220, and 260. A compositionally biased stretch (acidic residues) spans 253–262 (EAEDVEESEG). Residues 263–277 (PSESSSEPEPVVPRS) show a composition bias toward low complexity. WD repeat units follow at residues 366-426 (PEDG…MNET), 427-483 (HPLS…AWEL), 484-535 (PGTP…IYKV), 536-603 (QCVA…SLKL), 604-654 (YPFQ…NSIK), and 655-690 (RFLSTELAWLLPYNGVTVAQDNCYASYGLCGIHYID). At Ser597 the chain carries Phosphoserine. The interval 765 to 785 (SPEGPDHSSASSGVPNPPKAR) is disordered. Phosphoserine is present on residues Ser871, Ser892, and Ser893. Residues 889-911 (FQPSSPTRRPGFSPTSHRLLPTP) are disordered. The residue at position 895 (Thr895) is a Phosphothreonine. At Ser901 the chain carries Phosphoserine.

In terms of assembly, part of the TFIIIC subcomplex TFIIIC2, consisting of six subunits, GTF3C1, GTF3C2, GTF3C3, GTF3C4, GTF3C5 and GTF3C6.

Its subcellular location is the nucleus. Its function is as follows. Required for RNA polymerase III-mediated transcription. Component of TFIIIC that initiates transcription complex assembly on tRNA and is required for transcription of 5S rRNA and other stable nuclear and cytoplasmic RNAs. May play a direct role in stabilizing interactions of TFIIIC2 with TFIIIC1. The protein is General transcription factor 3C polypeptide 2 (GTF3C2) of Homo sapiens (Human).